A 273-amino-acid chain; its full sequence is Tryptase (273 aa).

An N-terminal signal peptide occupies residues 1–18 (MLKLLLLTLPLLSSLVHA). Positions 19 to 28 (APGPAMTREG) are cleaved as a propeptide — activation peptide. Residues 29–270 (IVGGQEAHGN…YLDWIHHYVP (242 aa)) enclose the Peptidase S1 domain. An N-linked (GlcNAc...) asparagine glycan is attached at asparagine 49. The cysteines at positions 57 and 73 are disulfide-linked. Residues histidine 72 and aspartate 119 each act as charge relay system in the active site. Residue asparagine 130 is glycosylated (N-linked (GlcNAc...) asparagine). Intrachain disulfides connect cysteine 153/cysteine 228, cysteine 186/cysteine 209, and cysteine 218/cysteine 246. Serine 222 functions as the Charge relay system in the catalytic mechanism.

It belongs to the peptidase S1 family. Tryptase subfamily.

The enzyme catalyses Preferential cleavage: Arg-|-Xaa, Lys-|-Xaa, but with more restricted specificity than trypsin.. Tryptase is the major neutral protease present in mast cells and is secreted upon the coupled activation-degranulation response of this cell type. May play a role in innate immunity. This chain is Tryptase (Tpsab1), found in Mus musculus (Mouse).